We begin with the raw amino-acid sequence, 449 residues long: Elongation factor 1-alpha (449 aa).

The tr-type G domain occupies 5-230; it reads KVHMNLVVVG…DMLEPPVRPS (226 aa). Residues 14–21 are G1; the sequence is GHVDAGKS. 14–21 provides a ligand contact to GTP; it reads GHVDAGKS. Residues 70–74 are G2; it reads GITID. The segment at 91-94 is G3; the sequence is DAPG. Residues 91–95 and 153–156 contribute to the GTP site; these read DAPGH and NKMD. The G4 stretch occupies residues 153 to 156; sequence NKMD. The segment at 194 to 196 is G5; it reads SGW. At glutamate 362 the chain carries 5-glutamyl glycerylphosphorylethanolamine.

It belongs to the TRAFAC class translation factor GTPase superfamily. Classic translation factor GTPase family. EF-Tu/EF-1A subfamily. In terms of processing, phosphatidylethanolamine (PE) is a direct precursor of the ethanolamine-phosphoglycerol (EPG) moiety.

It localises to the cytoplasm. Its function is as follows. This protein promotes the GTP-dependent binding of aminoacyl-tRNA to the A-site of ribosomes during protein biosynthesis. The protein is Elongation factor 1-alpha (TEF1) of Trypanosoma brucei brucei.